The sequence spans 1465 residues: Myomesin-2 (1465 aa).

The segment at 38-61 (ASTQASSQKSLSQRSSSQRASSQT) is disordered. The segment covering 41-61 (QASSQKSLSQRSSSQRASSQT) has biased composition (low complexity). Ig-like C2-type domains are found at residues 154-245 (PEIL…AAVV) and 266-371 (PLSS…AFLF). 5 consecutive Fibronectin type-III domains span residues 385 to 480 (APMD…ALDP), 513 to 608 (PPTG…AQDV), 614 to 707 (APGR…VQAA), 710 to 812 (VPSH…TMPE), and 815 to 912 (PAYD…ARPG). Ig-like C2-type domains are found at residues 904 to 1002 (PVLV…EELE), 1130 to 1211 (PHFA…QDVS), and 1345 to 1434 (RLIG…VTVS). Residues 1442-1465 (IPDMAPPQQAKPKLIPASASAAGQ) form a disordered region.

Interacts with TTN/titin.

It localises to the cytoplasm. The protein localises to the myofibril. Its subcellular location is the sarcomere. It is found in the m line. Major component of the vertebrate myofibrillar M band. Binds myosin, titin, and light meromyosin. This binding is dose dependent. This Homo sapiens (Human) protein is Myomesin-2 (MYOM2).